The primary structure comprises 963 residues: Importin-13 (963 aa).

HEAT repeat units follow at residues 24 to 54 (ENVE…QAQV), 56 to 88 (PQAW…KISR), 95 to 135 (TDQY…LSMM), 142 to 179 (AVAD…EFQT), 194 to 231 (LAVE…SWVQ), 236 to 268 (LQDC…NAIS), 276 to 325 (VNTL…ALLD), 330 to 372 (WQSF…DDIL), 375 to 438 (EAEK…YEML), 440 to 476 (AELL…FQSI), 487 to 522 (VVPG…WLAD), 524 to 558 (PVMI…CREC), 562 to 600 (LPPY…LLSA), 603 to 648 (VEEI…SNLF), 676 to 716 (PVVV…VKTL), 720 to 754 (FAPM…VHIF), 761 to 803 (FPPI…ALKR), 815 to 845 (VKAV…TELL), 860 to 893 (EDGR…FALN), and 897 to 931 (FSLL…QQIL). Residues 45–111 (AQKWLMQAQV…KAQLFTQITR (67 aa)) form the Importin N-terminal domain.

This sequence belongs to the importin beta family. In terms of assembly, interacts with UBC9, RAN, RBM8A, eIF-1A and PAX6. Expressed in fetal brain, heart, intestine and kidney.

It is found in the cytoplasm. The protein localises to the nucleus. Its function is as follows. Functions in nuclear protein import as nuclear transport receptor. Serves as receptor for nuclear localization signals (NLS) in cargo substrates. Is thought to mediate docking of the importin/substrate complex to the nuclear pore complex (NPC) through binding to nucleoporin and the complex is subsequently translocated through the pore by an energy requiring, Ran-dependent mechanism. At the nucleoplasmic side of the NPC, Ran binds to the importin, the importin/substrate complex dissociates and importin is re-exported from the nucleus to the cytoplasm where GTP hydrolysis releases Ran. The directionality of nuclear import is thought to be conferred by an asymmetric distribution of the GTP- and GDP-bound forms of Ran between the cytoplasm and nucleus. Mediates the nuclear import of UBC9, the RBM8A/MAGOH complex, PAX6 and probably other members of the paired homeobox family. Also mediates nuclear export of eIF-1A, and the cytoplasmic release of eIF-1A is triggered by the loading of import substrates onto IPO13. The sequence is that of Importin-13 (IPO13) from Homo sapiens (Human).